The following is an 836-amino-acid chain: Pentatricopeptide repeat-containing protein At1g79490, mitochondrial (836 aa).

A mitochondrion-targeting transit peptide spans 1–85; sequence MIRGRTAKVI…QCRSIVRRFC (85 aa). PPR repeat units lie at residues 204–238, 242–276, 277–311, 312–346, 347–381, 382–416, 417–451, 452–486, 487–521, 528–555, 556–590, and 591–625; these read SDEC…SSSH, SFNA…GCKI, DTQT…DSLL, DGST…KLRP, SFSV…GHRP, SATM…GFRP, NFGL…GFLP, TPST…GLRP, GLSS…GYSV, VLMI…GIKT, NNFI…AGKV, and DLVL…KHKA. The 77-residue stretch at 710 to 786 folds into the Smr domain; that stretch reads LDVRNLSVGA…APGELVMEWF (77 aa).

The protein belongs to the PPR family. P subfamily.

The protein localises to the mitochondrion. The protein is Pentatricopeptide repeat-containing protein At1g79490, mitochondrial (EMB2217) of Arabidopsis thaliana (Mouse-ear cress).